Reading from the N-terminus, the 113-residue chain is Ig heavy chain V-III region A4 (113 aa).

An Ig-like domain is found at E1–V113. C22 and C98 form a disulfide bridge.

This is Ig heavy chain V-III region A4 from Mus musculus (Mouse).